The following is a 254-amino-acid chain: Triosephosphate isomerase (254 aa).

Substrate is bound at residue 12 to 14 (NWK). Catalysis depends on His-99, which acts as the Electrophile. Catalysis depends on Glu-169, which acts as the Proton acceptor. Substrate-binding positions include Gly-175, Ser-214, and 235-236 (GG).

This sequence belongs to the triosephosphate isomerase family. In terms of assembly, homodimer.

It localises to the cytoplasm. The catalysed reaction is D-glyceraldehyde 3-phosphate = dihydroxyacetone phosphate. It functions in the pathway carbohydrate biosynthesis; gluconeogenesis. The protein operates within carbohydrate degradation; glycolysis; D-glyceraldehyde 3-phosphate from glycerone phosphate: step 1/1. Its function is as follows. Involved in the gluconeogenesis. Catalyzes stereospecifically the conversion of dihydroxyacetone phosphate (DHAP) to D-glyceraldehyde-3-phosphate (G3P). The polypeptide is Triosephosphate isomerase (Brucella melitensis biotype 1 (strain ATCC 23456 / CCUG 17765 / NCTC 10094 / 16M)).